The following is a 295-amino-acid chain: uncharacterized protein (295 aa).

The segment covering 1–13 has biased composition (basic residues); sequence MRHSVARPTRLPR. 2 disordered regions span residues 1 to 111 and 183 to 295; these read MRHS…AGLS and TSAF…PRDS. Low complexity predominate over residues 57–67; it reads AGPSAGAAARP. Pro residues predominate over residues 68-77; the sequence is AAPPPQPREP. Composition is skewed to basic and acidic residues over residues 245–257 and 280–295; these read LRPK…DRRP and GEPH…PRDS.

This is an uncharacterized protein from Homo sapiens (Human).